The sequence spans 185 residues: ATP synthase subunit b (185 aa).

A helical transmembrane segment spans residues 27-47 (GALIWKGLNILAFLGIVYYFG).

The protein belongs to the ATPase B chain family. As to quaternary structure, F-type ATPases have 2 components, F(1) - the catalytic core - and F(0) - the membrane proton channel. F(1) has five subunits: alpha(3), beta(3), gamma(1), delta(1), epsilon(1). F(0) has three main subunits: a(1), b(2) and c(10-14). The alpha and beta chains form an alternating ring which encloses part of the gamma chain. F(1) is attached to F(0) by a central stalk formed by the gamma and epsilon chains, while a peripheral stalk is formed by the delta and b chains.

Its subcellular location is the cell inner membrane. In terms of biological role, f(1)F(0) ATP synthase produces ATP from ADP in the presence of a proton or sodium gradient. F-type ATPases consist of two structural domains, F(1) containing the extramembraneous catalytic core and F(0) containing the membrane proton channel, linked together by a central stalk and a peripheral stalk. During catalysis, ATP synthesis in the catalytic domain of F(1) is coupled via a rotary mechanism of the central stalk subunits to proton translocation. Functionally, component of the F(0) channel, it forms part of the peripheral stalk, linking F(1) to F(0). The sequence is that of ATP synthase subunit b from Aquifex aeolicus (strain VF5).